A 199-amino-acid polypeptide reads, in one-letter code: NAD(P)H dehydrogenase (quinone) (199 aa).

A Flavodoxin-like domain is found at Val4–Val190. Residues Ser10–Ile15 and Thr78–Tyr80 contribute to the FMN site. Tyr12 contacts NAD(+). Trp98 is a binding site for substrate. FMN contacts are provided by residues Ser113–Gly119 and His134.

It belongs to the WrbA family. FMN serves as cofactor.

It catalyses the reaction a quinone + NADH + H(+) = a quinol + NAD(+). The enzyme catalyses a quinone + NADPH + H(+) = a quinol + NADP(+). The chain is NAD(P)H dehydrogenase (quinone) from Methylobacterium sp. (strain 4-46).